We begin with the raw amino-acid sequence, 321 residues long: MGPIMSTGETSTAHTVLGCQITDKTVITLFVILVFSCLVAVVGNGFIIIALGMKWLLRRTLSAHNKLLISLAASRFCLQCVVIGKNIYVFLNPSSFPYNPVIQLLNLMWDFLTAATIWFCSLLGFFYCVKIATLTHPVFVWLKYRLPGWVPWMLLSAVGMSSLTSILCFIGNHMIYQNYARRGHQPWNATGNSLRHSLEKFYFISIKIIMWTVPTVIFSIFMSLLLVSLVRHMKKTLLALSELRDVWAQAHFKALLPLLSFIILFISCFLTLVLSSASSTPYQEFRYWMWQVVIHLCTVIHPIVILLSNPVLRVVMKRGCC.

Over 1–28 (MGPIMSTGETSTAHTVLGCQITDKTVIT) the chain is Extracellular. Residues 29 to 49 (LFVILVFSCLVAVVGNGFIII) traverse the membrane as a helical segment. The Cytoplasmic portion of the chain corresponds to 50-75 (ALGMKWLLRRTLSAHNKLLISLAASR). The helical transmembrane segment at 76 to 96 (FCLQCVVIGKNIYVFLNPSSF) threads the bilayer. Residues 97–106 (PYNPVIQLLN) lie on the Extracellular side of the membrane. Residues 107–127 (LMWDFLTAATIWFCSLLGFFY) traverse the membrane as a helical segment. At 128–149 (CVKIATLTHPVFVWLKYRLPGW) the chain is on the cytoplasmic side. The chain crosses the membrane as a helical span at residues 150-170 (VPWMLLSAVGMSSLTSILCFI). Topologically, residues 171 to 207 (GNHMIYQNYARRGHQPWNATGNSLRHSLEKFYFISIK) are extracellular. N-linked (GlcNAc...) asparagine glycosylation is present at Asn188. A helical membrane pass occupies residues 208–228 (IIMWTVPTVIFSIFMSLLLVS). The Cytoplasmic portion of the chain corresponds to 229 to 253 (LVRHMKKTLLALSELRDVWAQAHFK). A helical membrane pass occupies residues 254–274 (ALLPLLSFIILFISCFLTLVL). The Extracellular portion of the chain corresponds to 275–286 (SSASSTPYQEFR). The chain crosses the membrane as a helical span at residues 287–307 (YWMWQVVIHLCTVIHPIVILL). Topologically, residues 308-321 (SNPVLRVVMKRGCC) are cytoplasmic.

This sequence belongs to the G-protein coupled receptor T2R family.

Its subcellular location is the membrane. Putative taste receptor which may play a role in the perception of bitterness. This chain is Taste receptor type 2 member 135, found in Rattus norvegicus (Rat).